A 471-amino-acid chain; its full sequence is Tyrosine--tRNA ligase, mitochondrial (471 aa).

Y71 contributes to the L-tyrosine binding site. ATP is bound at residue D75. The 'HIGH' region signature appears at 76–85 (PTGDSLHVGH). D115, Y215, Q219, D222, and Q241 together coordinate L-tyrosine. ATP is bound by residues I268 and K278. The 'KMSKS' region signature appears at 275-279 (KLGKS). N6-acetyllysine is present on residues K349 and K361.

The protein belongs to the class-I aminoacyl-tRNA synthetase family. Homodimer.

Its subcellular location is the mitochondrion matrix. It carries out the reaction tRNA(Tyr) + L-tyrosine + ATP = L-tyrosyl-tRNA(Tyr) + AMP + diphosphate + H(+). In terms of biological role, catalyzes the attachment of tyrosine to tRNA(Tyr) in a two-step reaction: tyrosine is first activated by ATP to form Tyr-AMP and then transferred to the acceptor end of tRNA(Tyr). The sequence is that of Tyrosine--tRNA ligase, mitochondrial (Yars2) from Rattus norvegicus (Rat).